The following is a 281-amino-acid chain: 18S rRNA (guanine-N(7))-methyltransferase (281 aa).

Residues 212–231 (LPKGLTESQDADQASESMFT) are compositionally biased toward polar residues. The segment at 212–281 (LPKGLTESQD…YTGRKRKPRF (70 aa)) is disordered. Positions 242-256 (RDLVKKSREWVLEKK) are enriched in basic and acidic residues.

Belongs to the class I-like SAM-binding methyltransferase superfamily. BUD23/WBSCR22 family. Heterodimer with TRMT112; this heterodimerization is necessary for the metabolic stability and activity of the catalytic subunit BUD23. Interacts with GRIP1. In terms of processing, may be ubiquitinated and targeted to degradation in response to pro-inflammatory cytokine signaling.

It localises to the nucleus. Its subcellular location is the nucleoplasm. The protein localises to the cytoplasm. It is found in the perinuclear region. The catalysed reaction is a guanosine in 18S rRNA + S-adenosyl-L-methionine = an N(7)-methylguanosine in 18S rRNA + S-adenosyl-L-homocysteine. S-adenosyl-L-methionine-dependent methyltransferase that specifically methylates the N(7) position of a guanine in 18S rRNA. Requires the methyltransferase adapter protein TRM112 for full rRNA methyltransferase activity. Involved in the pre-rRNA processing steps leading to small-subunit rRNA production independently of its RNA-modifying catalytic activity. Important for biogenesis end export of the 40S ribosomal subunit independent on its methyltransferase activity. Locus-specific steroid receptor coactivator. Potentiates transactivation by glucocorticoid (NR3C1), mineralocorticoid (NR3C2), androgen (AR) and progesterone (PGR) receptors. Required for the maintenance of open chromatin at the TSC22D3/GILZ locus to facilitate NR3C1 loading on the response elements. Required for maintenance of dimethylation on histone H3 'Lys-79' (H3K79me2), although direct histone methyltransferase activity is not observed in vitro. This Mus musculus (Mouse) protein is 18S rRNA (guanine-N(7))-methyltransferase.